A 196-amino-acid chain; its full sequence is Pentatricopeptide repeat-containing protein At1g62350 (196 aa).

PPR repeat units follow at residues 70 to 104 (DMFF…EVLF) and 105 to 139 (DQHT…PDRP).

It belongs to the PPR family. P subfamily.

This is Pentatricopeptide repeat-containing protein At1g62350 from Arabidopsis thaliana (Mouse-ear cress).